A 274-amino-acid polypeptide reads, in one-letter code: Probable WRKY transcription factor 49 (274 aa).

Positions 108-173 (NSNGMCDDGY…YEGFHFHYTY (66 aa)) form a DNA-binding region, WRKY. Positions 188–228 (KTKIHKHNAQDMNKKSQTQEESKEAQLGELTNQNHPVNKAQ) are disordered. Residues 193–222 (KHNAQDMNKKSQTQEESKEAQLGELTNQNH) adopt a coiled-coil conformation. The segment covering 195–213 (NAQDMNKKSQTQEESKEAQ) has biased composition (basic and acidic residues). Residues 216 to 228 (ELTNQNHPVNKAQ) show a composition bias toward polar residues.

Belongs to the WRKY group II-c family.

Its subcellular location is the nucleus. Its function is as follows. Transcription factor. Interacts specifically with the W box (5'-(T)TGAC[CT]-3'), a frequently occurring elicitor-responsive cis-acting element. The polypeptide is Probable WRKY transcription factor 49 (WRKY49) (Arabidopsis thaliana (Mouse-ear cress)).